The chain runs to 130 residues: Ribonuclease VapC22 (130 aa).

The PINc domain maps to 4–119; it reads VLLDSHVAYW…RLVTKDRRLR (116 aa). Residues Asp-7 and Asp-97 each coordinate Mg(2+).

The protein belongs to the PINc/VapC protein family. It depends on Mg(2+) as a cofactor.

It is found in the secreted. Toxic component of a type II toxin-antitoxin (TA) system. An RNase. Upon expression in M.smegmatis inhibits translation and colony formation. Its toxic effect on colony formation is neutralized by coexpression with cognate antitoxin VapB22; the effect on translation has not been tested but is probably neutralized also. The protein is Ribonuclease VapC22 of Mycobacterium tuberculosis (strain ATCC 25618 / H37Rv).